We begin with the raw amino-acid sequence, 542 residues long: Chaperonin GroEL (542 aa).

ATP contacts are provided by residues 29–32 (TLGP), 86–90 (DGTTT), G413, 476–478 (NAA), and D492.

This sequence belongs to the chaperonin (HSP60) family. In terms of assembly, forms a cylinder of 14 subunits composed of two heptameric rings stacked back-to-back. Interacts with the co-chaperonin GroES.

The protein localises to the cytoplasm. It carries out the reaction ATP + H2O + a folded polypeptide = ADP + phosphate + an unfolded polypeptide.. Functionally, together with its co-chaperonin GroES, plays an essential role in assisting protein folding. The GroEL-GroES system forms a nano-cage that allows encapsulation of the non-native substrate proteins and provides a physical environment optimized to promote and accelerate protein folding. This chain is Chaperonin GroEL, found in Lactococcus lactis subsp. lactis (strain IL1403) (Streptococcus lactis).